We begin with the raw amino-acid sequence, 403 residues long: CCA-adding enzyme (403 aa).

G32 and R35 together coordinate ATP. 2 residues coordinate CTP: G32 and R35. Positions 45 and 47 each coordinate Mg(2+). ATP-binding residues include R116, D159, R162, R165, and R168. The CTP site is built by R116, D159, R162, R165, and R168.

It belongs to the tRNA nucleotidyltransferase/poly(A) polymerase family. Bacterial CCA-adding enzyme type 3 subfamily. In terms of assembly, homodimer. Requires Mg(2+) as cofactor.

It carries out the reaction a tRNA precursor + 2 CTP + ATP = a tRNA with a 3' CCA end + 3 diphosphate. The enzyme catalyses a tRNA with a 3' CCA end + 2 CTP + ATP = a tRNA with a 3' CCACCA end + 3 diphosphate. Catalyzes the addition and repair of the essential 3'-terminal CCA sequence in tRNAs without using a nucleic acid template. Adds these three nucleotides in the order of C, C, and A to the tRNA nucleotide-73, using CTP and ATP as substrates and producing inorganic pyrophosphate. tRNA 3'-terminal CCA addition is required both for tRNA processing and repair. Also involved in tRNA surveillance by mediating tandem CCA addition to generate a CCACCA at the 3' terminus of unstable tRNAs. While stable tRNAs receive only 3'-terminal CCA, unstable tRNAs are marked with CCACCA and rapidly degraded. This is CCA-adding enzyme from Streptococcus suis (strain 98HAH33).